The sequence spans 207 residues: uncharacterized protein (207 aa).

Catalysis depends on charge relay system residues Ser119 and His160.

Belongs to the peptidase S51 family.

This is an uncharacterized protein from Pasteurella multocida (strain Pm70).